The primary structure comprises 478 residues: ATP-dependent RNA helicase DDX19A (478 aa).

A2 carries the N-acetylalanine modification. Positions 2–299 are N-terminal lobe; it reads ATDSWALAVD…DPNVIKLKRE (298 aa). Residue K26 forms a Glycyl lysine isopeptide (Lys-Gly) (interchain with G-Cter in SUMO1); alternate linkage. K26 is covalently cross-linked (Glycyl lysine isopeptide (Lys-Gly) (interchain with G-Cter in SUMO2); alternate). Position 42 is a phosphothreonine (T42). Residues 54–67 are N-terminal helix; sequence DRAAQSLLNKLIRS. The Q motif motif lies at 91–119; it reads KSFEELRLKPQLLQGVYAMGFNRPSKIQE. Residues Q118 and 137-144 contribute to the ATP site; that span reads SQSGTGKT. One can recognise a Helicase ATP-binding domain in the interval 124–294; it reads MMLAEPPQNL…QKVVPDPNVI (171 aa). The DEAD box signature appears at 241 to 244; sequence DEAD. Residues 300 to 478 are C-terminal lobe; sequence EETLDTIKQY…DLDEIEKIAN (179 aa). A Helicase C-terminal domain is found at 305–473; sequence TIKQYYVLCS…RLDTDDLDEI (169 aa). ATP contacts are provided by R428 and R431.

This sequence belongs to the DEAD box helicase family. DDX19/DBP5 subfamily.

The protein localises to the cytoplasm. It localises to the nucleus. It is found in the nucleoplasm. It catalyses the reaction ATP + H2O = ADP + phosphate + H(+). ATP-dependent RNA helicase involved in mRNA export from the nucleus. Rather than unwinding RNA duplexes, DDX19 functions as a remodeler of ribonucleoprotein particles, whereby proteins bound to nuclear mRNA are dissociated and replaced by cytoplasmic mRNA binding proteins. This is ATP-dependent RNA helicase DDX19A (DDX19A) from Homo sapiens (Human).